We begin with the raw amino-acid sequence, 426 residues long: Serine--tRNA ligase (426 aa).

Residue 233 to 235 (TSE) coordinates L-serine. 264–266 (RSE) lines the ATP pocket. An L-serine-binding site is contributed by glutamate 287. Residue 351–354 (EISS) participates in ATP binding. Serine 387 lines the L-serine pocket.

This sequence belongs to the class-II aminoacyl-tRNA synthetase family. Type-1 seryl-tRNA synthetase subfamily. Homodimer. The tRNA molecule binds across the dimer.

It is found in the cytoplasm. The catalysed reaction is tRNA(Ser) + L-serine + ATP = L-seryl-tRNA(Ser) + AMP + diphosphate + H(+). It carries out the reaction tRNA(Sec) + L-serine + ATP = L-seryl-tRNA(Sec) + AMP + diphosphate + H(+). It functions in the pathway aminoacyl-tRNA biosynthesis; selenocysteinyl-tRNA(Sec) biosynthesis; L-seryl-tRNA(Sec) from L-serine and tRNA(Sec): step 1/1. In terms of biological role, catalyzes the attachment of serine to tRNA(Ser). Is also able to aminoacylate tRNA(Sec) with serine, to form the misacylated tRNA L-seryl-tRNA(Sec), which will be further converted into selenocysteinyl-tRNA(Sec). The protein is Serine--tRNA ligase of Xylella fastidiosa (strain M23).